A 914-amino-acid polypeptide reads, in one-letter code: Solute carrier family 12 member 9 (914 aa).

Residues 1 to 36 (MASENSPLLAYRLLGEEGAAFPPNGAGGSGVASARK) lie on the Cytoplasmic side of the membrane. Ser-6 carries the phosphoserine modification. The helical transmembrane segment at 37 to 57 (LSTFLGVVVPTVLSMFSIVVF) threads the bilayer. Residues 58–72 (LRIGFVVGHAGLLQA) lie on the Extracellular side of the membrane. The chain crosses the membrane as a helical span at residues 73 to 93 (LAMLLVAYVILALTVLSVCAI). At 94 to 119 (ATNGAVRGGGAYFMISRTLGPEVGGS) the chain is on the cytoplasmic side. A helical membrane pass occupies residues 120 to 140 (IGLMFYLANVCGCAVSLLGLV). The Extracellular portion of the chain corresponds to 141–167 (ESILDVFGADVTGSSGIKVLPQGYGWN). The chain crosses the membrane as a helical span at residues 168-188 (LLYGSLLLGLVGGVCALGAGL). Residues 189 to 193 (YARAS) lie on the Cytoplasmic side of the membrane. The helical transmembrane segment at 194-214 (FLTFLLVSGSLASVLVSFVAV) threads the bilayer. Residues 215-262 (GPRNITLAPRPGTNGSSVPPRHGHFTGFNGSTLKDNLGAGYAEDYTTG) lie on the Extracellular side of the membrane. 3 N-linked (GlcNAc...) asparagine glycosylation sites follow: Asn-218, Asn-228, and Asn-243. The helical transmembrane segment at 263–283 (AMMTFASVFAVLFNGCTGIMA) threads the bilayer. The Cytoplasmic portion of the chain corresponds to 284 to 297 (GANMSGELKDPSRA). Residues 298–318 (IPLGTIIAVAYTFFIYILLFF) form a helical membrane-spanning segment. Residues 319 to 338 (LSSFTCDRALLQGDYGFFRD) lie on the Extracellular side of the membrane. Residues 339 to 359 (ISLWPPLVLIGIYATALSASM) form a helical membrane-spanning segment. At 360–376 (SSLIGASRILHALAQDD) the chain is on the cytoplasmic side. Residues 377–399 (LFGVILAPAKVVSGGGNPWGAVL) traverse the membrane as a helical segment. Residues 400–416 (YSWGLVQLVLLAGKLNT) are Extracellular-facing. A helical membrane pass occupies residues 417–437 (LAAVVTVFYLVAYAAVDLSCL). Residues 438-466 (SLEWASAPNFRPTFSLFSWHTCLLGVASC) lie on the Cytoplasmic side of the membrane. The helical transmembrane segment at 467–487 (LLMMFLISPGAAGGSLLLMGL) threads the bilayer. The Extracellular segment spans residues 488-740 (LSALLTARGG…LLRPRGGPGY (253 aa)). Residues 645 to 678 (PAFSEPAEGTREGGSPALSTLFPPPRAPGSPRAL) are disordered. The helical transmembrane segment at 741 to 761 (VDVCGLFLLQMATILSMVPAW) threads the bilayer. The Cytoplasmic portion of the chain corresponds to 762-914 (HSARLRIFLC…GVTPVTCTDL (153 aa)). A disordered region spans residues 843-864 (QQGRGTGGGPGGPEGRDGEEGP). The segment covering 846–855 (RGTGGGPGGP) has biased composition (gly residues).

The protein belongs to the SLC12A transporter family. In terms of assembly, interacts with SLC12A1.

Its subcellular location is the cell membrane. It is found in the lysosome membrane. In terms of biological role, may be an inhibitor of SLC12A1. Seems to correspond to a subunit of a multimeric transport system and thus, additional subunits may be required for its function. May play a role in lysosomal ion flux and osmoregulation. The protein is Solute carrier family 12 member 9 (Slc12a9) of Rattus norvegicus (Rat).